Consider the following 267-residue polypeptide: UPF0246 protein Dshi_3333 (267 aa).

Belongs to the UPF0246 family.

In Dinoroseobacter shibae (strain DSM 16493 / NCIMB 14021 / DFL 12), this protein is UPF0246 protein Dshi_3333.